The primary structure comprises 219 residues: Large ribosomal subunit protein uL4c (219 aa).

Residues 53–81 (REHTASTKTKSQVRGGGKKPWKQKGTGRA) are disordered. The span at 68–79 (GGKKPWKQKGTG) shows a compositional bias: basic residues.

It belongs to the universal ribosomal protein uL4 family. As to quaternary structure, part of the 50S ribosomal subunit.

The protein localises to the plastid. The protein resides in the chloroplast. Its function is as follows. Probably binds the 23S rRNA. The polypeptide is Large ribosomal subunit protein uL4c (rpl4) (Cyanidium caldarium (Red alga)).